A 507-amino-acid polypeptide reads, in one-letter code: ATP synthase subunit alpha, chloroplastic (507 aa).

Residue 170-177 participates in ATP binding; the sequence is GDRQTGKT.

It belongs to the ATPase alpha/beta chains family. F-type ATPases have 2 components, CF(1) - the catalytic core - and CF(0) - the membrane proton channel. CF(1) has five subunits: alpha(3), beta(3), gamma(1), delta(1), epsilon(1). CF(0) has four main subunits: a, b, b' and c.

It localises to the plastid. The protein resides in the chloroplast thylakoid membrane. The catalysed reaction is ATP + H2O + 4 H(+)(in) = ADP + phosphate + 5 H(+)(out). Produces ATP from ADP in the presence of a proton gradient across the membrane. The alpha chain is a regulatory subunit. The sequence is that of ATP synthase subunit alpha, chloroplastic from Pelargonium hortorum (Common geranium).